The sequence spans 154 residues: Ribonuclease H (154 aa).

Residues 1 to 141 (MKRIEAYTDG…ADELAREGME (141 aa)) form the RNase H type-1 domain. Asp-9, Glu-47, Asp-69, and Asp-133 together coordinate Mg(2+).

The protein belongs to the RNase H family. In terms of assembly, monomer. Mg(2+) is required as a cofactor.

It is found in the cytoplasm. The enzyme catalyses Endonucleolytic cleavage to 5'-phosphomonoester.. Its function is as follows. Endonuclease that specifically degrades the RNA of RNA-DNA hybrids. The protein is Ribonuclease H of Brucella anthropi (strain ATCC 49188 / DSM 6882 / CCUG 24695 / JCM 21032 / LMG 3331 / NBRC 15819 / NCTC 12168 / Alc 37) (Ochrobactrum anthropi).